We begin with the raw amino-acid sequence, 100 residues long: Aspartyl/glutamyl-tRNA(Asn/Gln) amidotransferase subunit C (100 aa).

This sequence belongs to the GatC family. Heterotrimer of A, B and C subunits.

It catalyses the reaction L-glutamyl-tRNA(Gln) + L-glutamine + ATP + H2O = L-glutaminyl-tRNA(Gln) + L-glutamate + ADP + phosphate + H(+). The catalysed reaction is L-aspartyl-tRNA(Asn) + L-glutamine + ATP + H2O = L-asparaginyl-tRNA(Asn) + L-glutamate + ADP + phosphate + 2 H(+). In terms of biological role, allows the formation of correctly charged Asn-tRNA(Asn) or Gln-tRNA(Gln) through the transamidation of misacylated Asp-tRNA(Asn) or Glu-tRNA(Gln) in organisms which lack either or both of asparaginyl-tRNA or glutaminyl-tRNA synthetases. The reaction takes place in the presence of glutamine and ATP through an activated phospho-Asp-tRNA(Asn) or phospho-Glu-tRNA(Gln). This chain is Aspartyl/glutamyl-tRNA(Asn/Gln) amidotransferase subunit C, found in Streptococcus pneumoniae (strain JJA).